A 152-amino-acid chain; its full sequence is MSEKYIVTWDMLQIHARKLASRLMPSEQWKGIIAVSRGGLVPGALLARELGIRHVDTVCISSYDHDNQRELKVLKRAEGDGEGFIVIDDLVDTGGTAVAIREMYPKAHFVTIFAKPAGRPLVDDYVVDIPQDTWIEQPWDMGVVFVPPISGR.

Residues 37–38 (RG), Arg-69, and 88–96 (DDLVDTGGT) each bind 5-phospho-alpha-D-ribose 1-diphosphate. Arg-69 provides a ligand contact to GMP. Position 89 (Asp-89) interacts with Mg(2+). Residues Asp-92 and Ile-135 each coordinate guanine. Xanthine is bound by residues Asp-92 and Ile-135. GMP-binding positions include 92 to 96 (DTGGT) and 134 to 135 (WI).

It belongs to the purine/pyrimidine phosphoribosyltransferase family. XGPT subfamily. As to quaternary structure, homotetramer. Mg(2+) serves as cofactor.

The protein localises to the cell inner membrane. It catalyses the reaction GMP + diphosphate = guanine + 5-phospho-alpha-D-ribose 1-diphosphate. The catalysed reaction is XMP + diphosphate = xanthine + 5-phospho-alpha-D-ribose 1-diphosphate. The enzyme catalyses IMP + diphosphate = hypoxanthine + 5-phospho-alpha-D-ribose 1-diphosphate. It participates in purine metabolism; GMP biosynthesis via salvage pathway; GMP from guanine: step 1/1. It functions in the pathway purine metabolism; XMP biosynthesis via salvage pathway; XMP from xanthine: step 1/1. Functionally, purine salvage pathway enzyme that catalyzes the transfer of the ribosyl-5-phosphate group from 5-phospho-alpha-D-ribose 1-diphosphate (PRPP) to the N9 position of the 6-oxopurines guanine and xanthine to form the corresponding ribonucleotides GMP (guanosine 5'-monophosphate) and XMP (xanthosine 5'-monophosphate), with the release of PPi. To a lesser extent, also acts on hypoxanthine. The sequence is that of Xanthine-guanine phosphoribosyltransferase from Shigella boydii serotype 4 (strain Sb227).